The chain runs to 244 residues: Small ribosomal subunit protein uS2 (244 aa).

It belongs to the universal ribosomal protein uS2 family.

The chain is Small ribosomal subunit protein uS2 from Desulforudis audaxviator (strain MP104C).